Reading from the N-terminus, the 510-residue chain is NAD(P)H-quinone oxidoreductase subunit 2 A, chloroplastic (510 aa).

A run of 13 helical transmembrane segments spans residues 26–46, 57–77, 99–119, 124–144, 149–169, 183–203, 227–247, 295–315, 323–342, 354–374, 395–415, 418–438, and 484–504; these read LFDG…ILLL, IPWF…ALLF, IFQF…VEYI, MAIT…MFLC, LITI…LSGY, YLLM…WLYG, PGIS…LSPA, WHPL…LIAI, MLAY…IIVG, YMLF…LFGL, ALSL…AGFF, LHLF…IGLF, and MIVC…IIAI.

It belongs to the complex I subunit 2 family. NDH is composed of at least 16 different subunits, 5 of which are encoded in the nucleus.

The protein resides in the plastid. Its subcellular location is the chloroplast thylakoid membrane. The catalysed reaction is a plastoquinone + NADH + (n+1) H(+)(in) = a plastoquinol + NAD(+) + n H(+)(out). It catalyses the reaction a plastoquinone + NADPH + (n+1) H(+)(in) = a plastoquinol + NADP(+) + n H(+)(out). Functionally, NDH shuttles electrons from NAD(P)H:plastoquinone, via FMN and iron-sulfur (Fe-S) centers, to quinones in the photosynthetic chain and possibly in a chloroplast respiratory chain. The immediate electron acceptor for the enzyme in this species is believed to be plastoquinone. Couples the redox reaction to proton translocation, and thus conserves the redox energy in a proton gradient. This is NAD(P)H-quinone oxidoreductase subunit 2 A, chloroplastic from Oenothera biennis (German evening primrose).